The following is a 604-amino-acid chain: Aspartate--tRNA(Asp/Asn) ligase (604 aa).

Glu175 is an L-aspartate binding site. The interval 199–202 is aspartate; it reads QQFK. Residues Arg221 and His456 each contribute to the L-aspartate site. Residue 221–223 coordinates ATP; sequence RDE. Glu496 is an ATP binding site. Arg503 is an L-aspartate binding site. Position 548-551 (548-551) interacts with ATP; sequence GVDR.

It belongs to the class-II aminoacyl-tRNA synthetase family. Type 1 subfamily. In terms of assembly, homodimer.

Its subcellular location is the cytoplasm. The catalysed reaction is tRNA(Asx) + L-aspartate + ATP = L-aspartyl-tRNA(Asx) + AMP + diphosphate. Functionally, aspartyl-tRNA synthetase with relaxed tRNA specificity since it is able to aspartylate not only its cognate tRNA(Asp) but also tRNA(Asn). Reaction proceeds in two steps: L-aspartate is first activated by ATP to form Asp-AMP and then transferred to the acceptor end of tRNA(Asp/Asn). The sequence is that of Aspartate--tRNA(Asp/Asn) ligase from Methylobacterium sp. (strain 4-46).